A 76-amino-acid chain; its full sequence is Kappa-actitoxin-Avd4m (76 aa).

The signal sequence occupies residues 1 to 19; it reads MNKALFLCLVVLCAAVVFA. Residues 20–31 constitute a propeptide that is removed on maturation; sequence AEDLQKAKHAPF. 3 disulfides stabilise this stretch: Cys-37-Cys-72, Cys-39-Cys-65, and Cys-55-Cys-73.

It belongs to the sea anemone type 3 (BDS) potassium channel toxin family. In terms of tissue distribution, weakly expressed in the ectodermal tissue from the distal and proximal tentacles, body wall, and oral disk.

Its subcellular location is the secreted. The protein localises to the nematocyst. Blocks Kv3 voltage-gated potassium channels. Reduces blood pressure. This chain is Kappa-actitoxin-Avd4m, found in Anemonia viridis (Snakelocks anemone).